The chain runs to 290 residues: Arylamine N-acetyltransferase 2 (290 aa).

Catalysis depends on C68, which acts as the Acyl-thioester intermediate. CoA contacts are provided by S103 and G104. 106–107 is a binding site for substrate; it reads IH. Catalysis depends on residues H107 and D122. Y208 provides a ligand contact to CoA.

It belongs to the arylamine N-acetyltransferase family.

The protein resides in the cytoplasm. The enzyme catalyses an arylamine + acetyl-CoA = an N-acetylarylamine + CoA. It catalyses the reaction an N-hydroxyarylamine + acetyl-CoA = an N-acetoxyarylamine + CoA. Functionally, catalyzes the N- or O-acetylation of various arylamine and heterocyclic amine substrates. Participates in the detoxification of a plethora of hydrazine and arylamine drugs. The polypeptide is Arylamine N-acetyltransferase 2 (Nat2) (Rattus norvegicus (Rat)).